Reading from the N-terminus, the 254-residue chain is MVNIKMTIQYDGTNYFGWQRQRKGRTIQATIEECLRKIFQREIKIRGAGRTDAGVHALGQVATFKAELKMSLDILKKVLNSLLPNDIKIIKLENVEDSFHPQHSVKRKSYIYYLCFDEECSCFIQRYVWHYPWKLDLSLMEEALSLFTGTKDFTAFSGSTDVKNKIRTVHDFTMQLLTKLCFMDMCLNGNFIKFRIEADGFLRYMVRNLVGCIIEIGKGKLRIESIQEAFESGKRPSTMQTAPSNGLFLEKVIY.

Asp52 serves as the catalytic Nucleophile. Residue Tyr110 participates in substrate binding.

It belongs to the tRNA pseudouridine synthase TruA family. As to quaternary structure, homodimer.

The catalysed reaction is uridine(38/39/40) in tRNA = pseudouridine(38/39/40) in tRNA. Its function is as follows. Formation of pseudouridine at positions 38, 39 and 40 in the anticodon stem and loop of transfer RNAs. This is tRNA pseudouridine synthase A from Thermodesulfovibrio yellowstonii (strain ATCC 51303 / DSM 11347 / YP87).